We begin with the raw amino-acid sequence, 312 residues long: Olfactory receptor 10D3 (312 aa).

Residues 1–26 (MEIKNCSVVTEFILLGIPHTEGFETL) lie on the Extracellular side of the membrane. A glycan (N-linked (GlcNAc...) asparagine) is linked at asparagine 5. A helical transmembrane segment spans residues 27–47 (LFVLFLPFYACTLVGNVSILV). Residues 48–57 (AVISSTRLHT) are Cytoplasmic-facing. A helical transmembrane segment spans residues 58 to 78 (PMYFFLGNLSVFDMGFSSVTC). Residues 79 to 97 (PKMLFYLMGLSRLISYQDC) lie on the Extracellular side of the membrane. Residues cysteine 97 and cysteine 179 are joined by a disulfide bond. Residues 98–118 (VSQLFFFHFLGSIECFLYTVM) form a helical membrane-spanning segment. Topologically, residues 119-139 (AYDRFAAICHPLRYSVIMNSK) are cytoplasmic. Residues 140 to 160 (ICVALAVGTWLLGCFHSSVLT) traverse the membrane as a helical segment. Over 161–197 (SLTFTLPYCGPNEVDHFFCDIPAILPLASADTSLAQR) the chain is Extracellular. The chain crosses the membrane as a helical span at residues 198 to 218 (VSFTNVGLVSLVCFLLILLSY). Residues 219 to 239 (TRITISILSIQSTEGRQRAFS) lie on the Cytoplasmic side of the membrane. The helical transmembrane segment at 240–260 (TCSAHLIAILCAYGPIITIYL) threads the bilayer. Residues 261 to 266 (QPTPNP) lie on the Extracellular side of the membrane. A helical membrane pass occupies residues 267–287 (MLGTVVQILMNLVGPMLNPLI). At 288-312 (YTLRNKEVKIALKKILHGKGSVSEG) the chain is on the cytoplasmic side.

This sequence belongs to the G-protein coupled receptor 1 family.

It is found in the cell membrane. Functionally, potential odorant receptor. In Mus musculus (Mouse), this protein is Olfactory receptor 10D3.